The chain runs to 107 residues: UPF0145 protein Sfri_2095 (107 aa).

This sequence belongs to the UPF0145 family.

The chain is UPF0145 protein Sfri_2095 from Shewanella frigidimarina (strain NCIMB 400).